The sequence spans 27 residues: uncharacterized protein (27 aa).

This is an uncharacterized protein from Saccharomyces cerevisiae (strain ATCC 204508 / S288c) (Baker's yeast).